The sequence spans 392 residues: DNA replication protein (392 aa).

The segment at asparagine 322–histidine 341 is disordered.

In terms of biological role, may play a role in viral DNA replication. Found associated with a viral DNA origin of replication and with host membranes, may attach this origin to the bacterial envelope to initiate replication. The chain is DNA replication protein (69) from Enterobacteria phage T4 (Bacteriophage T4).